The primary structure comprises 216 residues: Small ribosomal subunit protein eS6 (216 aa).

Belongs to the eukaryotic ribosomal protein eS6 family.

The sequence is that of Small ribosomal subunit protein eS6 from Staphylothermus marinus (strain ATCC 43588 / DSM 3639 / JCM 9404 / F1).